Consider the following 691-residue polypeptide: Threonine--tRNA ligase (691 aa).

A disordered region spans residues 1–22; sequence MSVPAQPAPGADGGDPRQPIRV. One can recognise a TGS domain in the interval 1–73; it reads MSVPAQPAPG…DADAEVTPIA (73 aa). The interval 268-574 is catalytic; the sequence is DHRKLGVELD…LTEHYAGAFP (307 aa). Zn(2+) contacts are provided by Cys-373, His-424, and His-551.

This sequence belongs to the class-II aminoacyl-tRNA synthetase family. As to quaternary structure, homodimer. The cofactor is Zn(2+).

Its subcellular location is the cytoplasm. It catalyses the reaction tRNA(Thr) + L-threonine + ATP = L-threonyl-tRNA(Thr) + AMP + diphosphate + H(+). Functionally, catalyzes the attachment of threonine to tRNA(Thr) in a two-step reaction: L-threonine is first activated by ATP to form Thr-AMP and then transferred to the acceptor end of tRNA(Thr). Also edits incorrectly charged L-seryl-tRNA(Thr). This is Threonine--tRNA ligase from Mycobacterium ulcerans (strain Agy99).